Here is a 69-residue protein sequence, read N- to C-terminus: Sec-independent protein translocase protein TatA (69 aa).

Residues 1 to 21 (MGSLSIWHWLIVLAIALLLFG) traverse the membrane as a helical segment. The tract at residues 41–69 (KGMNDDEETPPPAQSTTSRTVEHKADESK) is disordered. The segment covering 60-69 (TVEHKADESK) has biased composition (basic and acidic residues).

It belongs to the TatA/E family. In terms of assembly, the Tat system comprises two distinct complexes: a TatABC complex, containing multiple copies of TatA, TatB and TatC subunits, and a separate TatA complex, containing only TatA subunits. Substrates initially bind to the TatABC complex, which probably triggers association of the separate TatA complex to form the active translocon.

The protein resides in the cell inner membrane. Its function is as follows. Part of the twin-arginine translocation (Tat) system that transports large folded proteins containing a characteristic twin-arginine motif in their signal peptide across membranes. TatA could form the protein-conducting channel of the Tat system. This chain is Sec-independent protein translocase protein TatA, found in Rhizobium rhizogenes (strain K84 / ATCC BAA-868) (Agrobacterium radiobacter).